Consider the following 721-residue polypeptide: DNA ligase (721 aa).

Residues 39–43 (DAEYD), 89–90 (SL), and Glu123 each bind NAD(+). Lys125 functions as the N6-AMP-lysine intermediate in the catalytic mechanism. Residues Arg146, Glu186, Lys302, and Lys326 each contribute to the NAD(+) site. Zn(2+)-binding residues include Cys418, Cys421, Cys436, and Cys442. Positions 556 to 588 (QASSAAREGEPANADGAYDPATVTPDSDTAGAE) are disordered. The BRCT domain maps to 641-721 (TKDSAVAGKT…AWAEIVRQAG (81 aa)).

This sequence belongs to the NAD-dependent DNA ligase family. LigA subfamily. The cofactor is Mg(2+). It depends on Mn(2+) as a cofactor.

The enzyme catalyses NAD(+) + (deoxyribonucleotide)n-3'-hydroxyl + 5'-phospho-(deoxyribonucleotide)m = (deoxyribonucleotide)n+m + AMP + beta-nicotinamide D-nucleotide.. In terms of biological role, DNA ligase that catalyzes the formation of phosphodiester linkages between 5'-phosphoryl and 3'-hydroxyl groups in double-stranded DNA using NAD as a coenzyme and as the energy source for the reaction. It is essential for DNA replication and repair of damaged DNA. The polypeptide is DNA ligase (Novosphingobium aromaticivorans (strain ATCC 700278 / DSM 12444 / CCUG 56034 / CIP 105152 / NBRC 16084 / F199)).